The following is a 69-amino-acid chain: Intrepicalcin (69 aa).

A signal peptide spans 1–27 (MRQNTMTIIFIVFIVTFASLTIYGAEA). Residues 28 to 36 (SEANFLERR) constitute a propeptide that is removed on maturation. 3 cysteine pairs are disulfide-bonded: cysteine 39-cysteine 53, cysteine 46-cysteine 57, and cysteine 52-cysteine 68. The tract at residues 59-60 (RR) is essential for stimulation of [3H]ryanodine binding to RYR1.

It belongs to the scorpion calcin family. Expressed by the venom gland.

Its subcellular location is the secreted. In terms of biological role, this toxin stabilizes ryanodine receptor 1 (RyR1) opening in a long-lasting subconductance state (55% of the full conductance state). Furthermore, it triggers calcium release from sarcoplasmic vesicles (45.3 nM are enough to induce a sharp release, and 50% of the total calcium is released after toxin (100 nM) addition) probably by acting as a cell-penetrating peptide (CPP). In addition, it has been shown to dose-dependently stimulate ryanodine binding to RyR1 (EC(50)=17.4 nM). It also augments the bell-shaped calcium-[3H]ryanodine binding curve that is maximal at about 10 uM calcium concentration. It binds a different site as ryanodine. It acts synergistically with caffeine. In vivo, intracerebroventricular injection into mice induces neurotoxic symptoms, followed by death. The chain is Intrepicalcin from Thorellius intrepidus (Scorpion).